We begin with the raw amino-acid sequence, 185 residues long: Ribosome-recycling factor (185 aa).

Belongs to the RRF family.

It localises to the cytoplasm. Responsible for the release of ribosomes from messenger RNA at the termination of protein biosynthesis. May increase the efficiency of translation by recycling ribosomes from one round of translation to another. This is Ribosome-recycling factor from Aeromonas salmonicida (strain A449).